The chain runs to 90 residues: Acylphosphatase (90 aa).

An Acylphosphatase-like domain is found at 4–90 (TVHLRITGHV…KGQYKDFRIY (87 aa)). Active-site residues include R19 and N37.

This sequence belongs to the acylphosphatase family.

It carries out the reaction an acyl phosphate + H2O = a carboxylate + phosphate + H(+). This Caldanaerobacter subterraneus subsp. tengcongensis (strain DSM 15242 / JCM 11007 / NBRC 100824 / MB4) (Thermoanaerobacter tengcongensis) protein is Acylphosphatase (acyP).